The following is a 331-amino-acid chain: Ribose-phosphate pyrophosphokinase (331 aa).

55–57 (DGE) contributes to the ATP binding site. The Mg(2+) site is built by H148 and D187. K211 is a catalytic residue. Residues R213, D237, and 241–245 (DTAGT) contribute to the D-ribose 5-phosphate site.

The protein belongs to the ribose-phosphate pyrophosphokinase family. Class I subfamily. As to quaternary structure, homohexamer. Mg(2+) is required as a cofactor.

Its subcellular location is the cytoplasm. The enzyme catalyses D-ribose 5-phosphate + ATP = 5-phospho-alpha-D-ribose 1-diphosphate + AMP + H(+). It functions in the pathway metabolic intermediate biosynthesis; 5-phospho-alpha-D-ribose 1-diphosphate biosynthesis; 5-phospho-alpha-D-ribose 1-diphosphate from D-ribose 5-phosphate (route I): step 1/1. Involved in the biosynthesis of the central metabolite phospho-alpha-D-ribosyl-1-pyrophosphate (PRPP) via the transfer of pyrophosphoryl group from ATP to 1-hydroxyl of ribose-5-phosphate (Rib-5-P). This chain is Ribose-phosphate pyrophosphokinase, found in Synechococcus elongatus (strain ATCC 33912 / PCC 7942 / FACHB-805) (Anacystis nidulans R2).